We begin with the raw amino-acid sequence, 295 residues long: Alpha-ketoglutarate-dependent dioxygenase alkB homolog 3 (295 aa).

The disordered stretch occupies residues Met1 to Gln48. The span at Ser22–Ser35 shows a compositional bias: low complexity. Residues Trp115 and Tyr141 to Tyr143 each bind substrate. A Fe2OG dioxygenase domain is found at Thr172–Tyr278. A (4R)-5-hydroxyleucine; alternate modification is found at Leu177. Position 177 is a (4R)-5-oxoleucine; alternate (Leu177). Asn179–Tyr181 serves as a coordination point for 2-oxoglutarate. The Fe cation site is built by His191 and Asp193. Residue Asp194 coordinates substrate. His257 lines the Fe cation pocket. 2-oxoglutarate-binding positions include Arg269–Arg275 and Arg275.

Belongs to the alkB family. Interacts with the ASCC complex composed of ASCC1, ASCC2 and ASCC3. Interacts directly with ASCC3, and is thereby recruited to the ASCC complex. Interacts with OTUD4; the interaction is direct. Interacts with USP7 and USP9X. Requires Fe(2+) as cofactor. In terms of processing, ubiquitinated; undergoes 'Lys-48'-linked polyubiquitination. OTUD4 promotes USP7 and USP9X-dependent deubiquitination of 'Lys-48'-polyubiquitinated ALKBH3 promoting the repair of alkylated DNA lesions.

It is found in the nucleus. The protein resides in the cytoplasm. The enzyme catalyses an N(1)-methyladenosine in mRNA + 2-oxoglutarate + O2 = an adenosine in mRNA + formaldehyde + succinate + CO2. It catalyses the reaction a methylated nucleobase within DNA + 2-oxoglutarate + O2 = a nucleobase within DNA + formaldehyde + succinate + CO2. The catalysed reaction is an N(1)-methyl-2'-deoxyadenosine in single-stranded DNA + 2-oxoglutarate + O2 = a 2'-deoxyadenosine in single-stranded DNA + formaldehyde + succinate + CO2 + H(+). It carries out the reaction an N(3)-methyl-2'-deoxycytidine in single-stranded DNA + 2-oxoglutarate + O2 = a 2'-deoxycytidine in single-stranded DNA + formaldehyde + succinate + CO2 + H(+). The enzyme catalyses a 3,N(4)-etheno-2'-deoxycytidine in single-stranded DNA + 2-oxoglutarate + O2 + H2O = a 2'-deoxycytidine in single-stranded DNA + glyoxal + succinate + CO2. With respect to regulation, activated by ascorbate. In terms of biological role, dioxygenase that mediates demethylation of DNA and RNA containing 1-methyladenosine (m1A). Repairs alkylated DNA containing 1-methyladenosine (m1A) and 3-methylcytosine (m3C) by oxidative demethylation. Has a strong preference for single-stranded DNA. Able to process alkylated m3C within double-stranded regions via its interaction with ASCC3, which promotes DNA unwinding to generate single-stranded substrate needed for ALKBH3. Can repair exocyclic 3,N4-ethenocytosine adducs in single-stranded DNA. Also acts on RNA. Demethylates N(1)-methyladenosine (m1A) RNA, an epigenetic internal modification of messenger RNAs (mRNAs) highly enriched within 5'-untranslated regions (UTRs) and in the vicinity of start codons. Requires molecular oxygen, alpha-ketoglutarate and iron. This Rattus norvegicus (Rat) protein is Alpha-ketoglutarate-dependent dioxygenase alkB homolog 3.